We begin with the raw amino-acid sequence, 141 residues long: MGNKESRYLEMCSEEAWLNIPNIFKCIFIRKLFYNKWLKFQEKKLKKSLKLLSFYHPKKDFVGIRDMLQMAPGGSYFITDNITEEFLMLVVKHPEDGSAEFTKLCLKGSCIVIDGYYYDNLHIFISETPDIYKYPLIRYDR.

The protein belongs to the asfivirus MGF 100 family.

In terms of biological role, plays a role in virus cell tropism, and may be required for efficient virus replication in macrophages. In African swine fever virus (isolate Tick/South Africa/Pretoriuskop Pr4/1996) (ASFV), this protein is Protein MGF 100-2L.